The primary structure comprises 493 residues: MSELTALTIAEARDKLKAKAITATELTDAYLSAIDAANDAINAYVAVTHDQARSMAKASDERIAKGEAGALEGIPLGVKDLFATKGVHTQACSHILDGFKPEYESTVTANLWADGAVMLGKLNMDEVAMGSSNETSYYGPVKNPWRAKGSNADLVPGGSSGGSAAAVAAHLCAGATATDTGGSIRQPAAFTGTVGIKPTYGRVSRWGTVAFASSLDQAGPIARDVRDAAILMKSMASLDLKDTTSVDLPVPDYEAALGRSVKGMKIGIPREYRVDGMPGEIEELWQKGIQYLKDAGAEIVDISLPHTKYALPAYYIVAPAEASSNLARYDGVRYGLRVPGKDIADMYEQTRAAGFGKEVKRRIMIGTYVLSAGYYDAYYLRAQKVRTLIKKDFEDVFAKGVDAILTPATPSAAFGLADEVLANDPVKMYLNDIFTVTVNMAGLPGIAVPAGLNGQGLPLGLQLIGRPFEEETLFQAAHVIEQAAGRFTPAKWW.

Active-site charge relay system residues include Lys-79 and Ser-159. Residue Ser-183 is the Acyl-ester intermediate of the active site.

This sequence belongs to the amidase family. GatA subfamily. Heterotrimer of A, B and C subunits.

It catalyses the reaction L-glutamyl-tRNA(Gln) + L-glutamine + ATP + H2O = L-glutaminyl-tRNA(Gln) + L-glutamate + ADP + phosphate + H(+). Functionally, allows the formation of correctly charged Gln-tRNA(Gln) through the transamidation of misacylated Glu-tRNA(Gln) in organisms which lack glutaminyl-tRNA synthetase. The reaction takes place in the presence of glutamine and ATP through an activated gamma-phospho-Glu-tRNA(Gln). This is Glutamyl-tRNA(Gln) amidotransferase subunit A from Brucella abortus (strain S19).